Consider the following 431-residue polypeptide: Glutamate--tRNA ligase 1 (431 aa).

Positions 6-16 match the 'HIGH' region motif; sequence PSPTGDMHIGN. A 'KMSKS' region motif is present at residues 235–239; the sequence is KMSKR. Position 238 (Lys-238) interacts with ATP.

It belongs to the class-I aminoacyl-tRNA synthetase family. Glutamate--tRNA ligase type 1 subfamily. Monomer.

The protein resides in the cytoplasm. It catalyses the reaction tRNA(Glu) + L-glutamate + ATP = L-glutamyl-tRNA(Glu) + AMP + diphosphate. Its function is as follows. Catalyzes the attachment of glutamate to tRNA(Glu) in a two-step reaction: glutamate is first activated by ATP to form Glu-AMP and then transferred to the acceptor end of tRNA(Glu). The polypeptide is Glutamate--tRNA ligase 1 (Campylobacter concisus (strain 13826)).